The chain runs to 75 residues: Calhepatin (75 aa).

Serine 1 carries the N-acetylserine modification. EF-hand domains follow at residues 2-37 (ADEQ…VHPK) and 38-73 (VSRN…LADL). Residues aspartate 15, aspartate 17, serine 19, threonine 21, glutamate 26, aspartate 51, asparagine 53, aspartate 55, glutamine 57, and glutamate 62 each coordinate Ca(2+).

In terms of assembly, monomer and homodimer. As to expression, liver, and to a much lower level intestine.

Functionally, binds both calcium and copper, but not zinc. May be involved in calcium signal transduction. The sequence is that of Calhepatin from Lepidosiren paradoxus (South American lungfish).